We begin with the raw amino-acid sequence, 117 residues long: MYTKRINRLQRISQEIQRKVAIIIHHKVHDPRVGLPTISGVQVSRDLKNAKIFITFLDKNNIEEINFSILILQKASGFIRFLLANSMNLRTVPVLLFKYDYSLKEGIKICKLISQLK.

This sequence belongs to the RbfA family. In terms of assembly, monomer. Binds 30S ribosomal subunits, but not 50S ribosomal subunits or 70S ribosomes.

It is found in the cytoplasm. Its function is as follows. One of several proteins that assist in the late maturation steps of the functional core of the 30S ribosomal subunit. Associates with free 30S ribosomal subunits (but not with 30S subunits that are part of 70S ribosomes or polysomes). Required for efficient processing of 16S rRNA. May interact with the 5'-terminal helix region of 16S rRNA. The protein is Ribosome-binding factor A of Blochmanniella floridana.